The chain runs to 282 residues: Phosphatidylserine decarboxylase proenzyme (282 aa).

Active-site charge relay system; for autoendoproteolytic cleavage activity residues include aspartate 88, histidine 144, and serine 247. Serine 247 serves as the catalytic Schiff-base intermediate with substrate; via pyruvic acid; for decarboxylase activity. Serine 247 is subject to Pyruvic acid (Ser); by autocatalysis.

This sequence belongs to the phosphatidylserine decarboxylase family. PSD-B subfamily. Prokaryotic type I sub-subfamily. Heterodimer of a large membrane-associated beta subunit and a small pyruvoyl-containing alpha subunit. Pyruvate serves as cofactor. In terms of processing, is synthesized initially as an inactive proenzyme. Formation of the active enzyme involves a self-maturation process in which the active site pyruvoyl group is generated from an internal serine residue via an autocatalytic post-translational modification. Two non-identical subunits are generated from the proenzyme in this reaction, and the pyruvate is formed at the N-terminus of the alpha chain, which is derived from the carboxyl end of the proenzyme. The autoendoproteolytic cleavage occurs by a canonical serine protease mechanism, in which the side chain hydroxyl group of the serine supplies its oxygen atom to form the C-terminus of the beta chain, while the remainder of the serine residue undergoes an oxidative deamination to produce ammonia and the pyruvoyl prosthetic group on the alpha chain. During this reaction, the Ser that is part of the protease active site of the proenzyme becomes the pyruvoyl prosthetic group, which constitutes an essential element of the active site of the mature decarboxylase.

Its subcellular location is the cell membrane. The catalysed reaction is a 1,2-diacyl-sn-glycero-3-phospho-L-serine + H(+) = a 1,2-diacyl-sn-glycero-3-phosphoethanolamine + CO2. It functions in the pathway phospholipid metabolism; phosphatidylethanolamine biosynthesis; phosphatidylethanolamine from CDP-diacylglycerol: step 2/2. Catalyzes the formation of phosphatidylethanolamine (PtdEtn) from phosphatidylserine (PtdSer). The chain is Phosphatidylserine decarboxylase proenzyme from Xanthomonas campestris pv. campestris (strain B100).